The sequence spans 354 residues: Guanine nucleotide-binding protein G(o) subunit alpha (354 aa).

Residue glycine 2 is the site of N-myristoyl glycine attachment. A lipid anchor (S-palmitoyl cysteine) is attached at cysteine 3. Residues 32–354 (KDIKLLLLGA…ANNLRGCGLY (323 aa)) form the G-alpha domain. The segment at 35–48 (KLLLLGAGESGKST) is G1 motif. GTP-binding positions include 40–47 (GAGESGKS), 176–182 (LRTRVKT), 201–205 (DVGGQ), 270–273 (NKKD), and alanine 326. Residues serine 47 and threonine 182 each coordinate Mg(2+). The interval 174-182 (DILRTRVKT) is G2 motif. The G3 motif stretch occupies residues 197–206 (FKLFDVGGQR). Residues 266–273 (ILFLNKKD) are G4 motif. A G5 motif region spans residues 324-329 (TCATDT).

This sequence belongs to the G-alpha family. G(i/o/t/z) subfamily. In terms of assembly, g proteins are composed of 3 units; alpha, beta and gamma. The alpha chain contains the guanine nucleotide binding site.

Functionally, guanine nucleotide-binding proteins (G proteins) are involved as modulators or transducers in various transmembrane signaling systems. The G(o) protein function is not clear. The polypeptide is Guanine nucleotide-binding protein G(o) subunit alpha (Lymnaea stagnalis (Great pond snail)).